We begin with the raw amino-acid sequence, 378 residues long: tRNA-specific 2-thiouridylase MnmA (378 aa).

ATP-binding positions include 14 to 21 (AMSGGVDS) and Leu40. The active-site Nucleophile is the Cys109. Cys109 and Cys208 are joined by a disulfide. Gly133 serves as a coordination point for ATP. The interval 156 to 158 (KDQ) is interaction with tRNA. Cys208 functions as the Cysteine persulfide intermediate in the catalytic mechanism.

This sequence belongs to the MnmA/TRMU family.

The protein localises to the cytoplasm. The catalysed reaction is S-sulfanyl-L-cysteinyl-[protein] + uridine(34) in tRNA + AH2 + ATP = 2-thiouridine(34) in tRNA + L-cysteinyl-[protein] + A + AMP + diphosphate + H(+). In terms of biological role, catalyzes the 2-thiolation of uridine at the wobble position (U34) of tRNA, leading to the formation of s(2)U34. In Streptomyces griseus subsp. griseus (strain JCM 4626 / CBS 651.72 / NBRC 13350 / KCC S-0626 / ISP 5235), this protein is tRNA-specific 2-thiouridylase MnmA.